Reading from the N-terminus, the 466-residue chain is 3-isopropylmalate dehydratase large subunit (466 aa).

3 residues coordinate [4Fe-4S] cluster: C347, C407, and C410.

This sequence belongs to the aconitase/IPM isomerase family. LeuC type 1 subfamily. As to quaternary structure, heterodimer of LeuC and LeuD. [4Fe-4S] cluster is required as a cofactor.

The catalysed reaction is (2R,3S)-3-isopropylmalate = (2S)-2-isopropylmalate. Its pathway is amino-acid biosynthesis; L-leucine biosynthesis; L-leucine from 3-methyl-2-oxobutanoate: step 2/4. Its function is as follows. Catalyzes the isomerization between 2-isopropylmalate and 3-isopropylmalate, via the formation of 2-isopropylmaleate. This Pectobacterium atrosepticum (strain SCRI 1043 / ATCC BAA-672) (Erwinia carotovora subsp. atroseptica) protein is 3-isopropylmalate dehydratase large subunit.